The sequence spans 161 residues: Large ribosomal subunit protein uL30m (161 aa).

The transit peptide at 1–34 (MAGILRSIVQRPPGRLQTATKGVEPLVCVDWIRH) directs the protein to the mitochondrion.

This sequence belongs to the universal ribosomal protein uL30 family. As to quaternary structure, component of the mitochondrial ribosome large subunit (39S) which comprises a 16S rRNA and about 50 distinct proteins.

The protein localises to the mitochondrion. The chain is Large ribosomal subunit protein uL30m (MRPL30) from Bos taurus (Bovine).